The following is a 612-amino-acid chain: Dihydroxy-acid dehydratase (612 aa).

Aspartate 81 is a Mg(2+) binding site. Cysteine 122 provides a ligand contact to [2Fe-2S] cluster. Residues aspartate 123 and lysine 124 each contribute to the Mg(2+) site. Lysine 124 carries the N6-carboxylysine modification. Cysteine 195 contacts [2Fe-2S] cluster. Mg(2+) is bound at residue glutamate 491. Serine 517 serves as the catalytic Proton acceptor.

This sequence belongs to the IlvD/Edd family. In terms of assembly, homodimer. The cofactor is [2Fe-2S] cluster. It depends on Mg(2+) as a cofactor.

It carries out the reaction (2R)-2,3-dihydroxy-3-methylbutanoate = 3-methyl-2-oxobutanoate + H2O. It catalyses the reaction (2R,3R)-2,3-dihydroxy-3-methylpentanoate = (S)-3-methyl-2-oxopentanoate + H2O. It functions in the pathway amino-acid biosynthesis; L-isoleucine biosynthesis; L-isoleucine from 2-oxobutanoate: step 3/4. It participates in amino-acid biosynthesis; L-valine biosynthesis; L-valine from pyruvate: step 3/4. Functions in the biosynthesis of branched-chain amino acids. Catalyzes the dehydration of (2R,3R)-2,3-dihydroxy-3-methylpentanoate (2,3-dihydroxy-3-methylvalerate) into 2-oxo-3-methylpentanoate (2-oxo-3-methylvalerate) and of (2R)-2,3-dihydroxy-3-methylbutanoate (2,3-dihydroxyisovalerate) into 2-oxo-3-methylbutanoate (2-oxoisovalerate), the penultimate precursor to L-isoleucine and L-valine, respectively. The protein is Dihydroxy-acid dehydratase of Rhizobium leguminosarum bv. trifolii (strain WSM2304).